The sequence spans 238 residues: Response regulator receiver protein Anae109_2439 (238 aa).

Response regulatory domains follow at residues 3–117 and 121–228; these read RYLI…AAAR and LVAV…ERLH. 4-aspartylphosphate occurs at positions 52 and 169.

Is diphosphorylated by GchK.

In terms of biological role, member of the two-component regulatory system GcHK/Anae109_2439. Is involved in a signal transduction system responding to oxygen availability. In Anaeromyxobacter sp. (strain Fw109-5), this protein is Response regulator receiver protein Anae109_2439.